The following is a 697-amino-acid chain: Disintegrin and metalloproteinase domain-containing protein 26A (697 aa).

Positions 1 to 22 (MFLKFCLWTMFFFSAWSPIGHA) are cleaved as a signal peptide. Positions 23 to 187 (KYSSLLEVVT…NAPTLLQIPY (165 aa)) are excised as a propeptide. N-linked (GlcNAc...) asparagine glycosylation occurs at asparagine 127. The Cysteine switch signature appears at 159 to 166 (MRCGLSEE). Cysteine 161 contacts Zn(2+). Over 188 to 671 (ENWWTHHRFI…PPLPLSHSKW (484 aa)) the chain is Extracellular. The Peptidase M12B domain occupies 195–385 (RFIEYFVVLD…TKRSCLYDIP (191 aa)). Asparagine 214 is a glycosylation site (N-linked (GlcNAc...) asparagine). 3 cysteine pairs are disulfide-bonded: cysteine 305–cysteine 380, cysteine 344–cysteine 366, and cysteine 346–cysteine 351. Histidine 329 is a Zn(2+) binding site. Residue glutamate 330 is part of the active site. 2 residues coordinate Zn(2+): histidine 333 and histidine 339. N-linked (GlcNAc...) asparagine glycans are attached at residues asparagine 365, asparagine 391, asparagine 464, asparagine 506, asparagine 531, and asparagine 573. The Disintegrin domain maps to 392-478 (LTVCGNKVVE…ECPGDVYKAD (87 aa)). Cysteines 450 and 470 form a disulfide. Positions 616-649 (LVSNCSPQLYHMQGICNNKQHCHCGVTWKPPDCQ) constitute an EGF-like domain. 2 disulfides stabilise this stretch: cysteine 620/cysteine 631 and cysteine 639/cysteine 648. A helical membrane pass occupies residues 672–692 (IVYILIVLDVCIVIIIYLFSF). Residues 693–697 (YKLSK) lie on the Cytoplasmic side of the membrane.

The cofactor is Zn(2+). As to expression, expressed in sperm (at protein level). Expressed specifically in testis.

The protein localises to the membrane. Functionally, sperm surface membrane protein that may be involved in spermatogenesis and fertilization. The protein is Disintegrin and metalloproteinase domain-containing protein 26A of Mus musculus (Mouse).